A 301-amino-acid chain; its full sequence is Small ribosomal subunit protein uS2 (301 aa).

It belongs to the universal ribosomal protein uS2 family. In terms of assembly, component of the small ribosomal subunit. Mature ribosomes consist of a small (40S) and a large (60S) subunit. The 40S subunit contains about 33 different proteins and 1 molecule of RNA (18S). The 60S subunit contains about 49 different proteins and 3 molecules of RNA (25S, 5.8S and 5S). Interacts with RPS21.

It localises to the cytoplasm. Its function is as follows. Required for the assembly and/or stability of the 40S ribosomal subunit. Required for the processing of the 20S rRNA-precursor to mature 18S rRNA in a late step of the maturation of 40S ribosomal subunits. In Ajellomyces dermatitidis (strain ER-3 / ATCC MYA-2586) (Blastomyces dermatitidis), this protein is Small ribosomal subunit protein uS2.